The sequence spans 329 residues: Ubiquinol oxidase 1c, mitochondrial (329 aa).

Residues 1–45 (MITTLLRRSLLDASKQATSINGILFHQLAPAKYFRVPAVGGLRDF) constitute a mitochondrion transit peptide. A helical transmembrane segment spans residues 154-174 (AIMLETVAAVPGMVGGMLMHF). The Fe cation site is built by glutamate 158, glutamate 197, and histidine 200. A helical transmembrane segment spans residues 216-236 (ALVISVQGVFFNAYLIGYIIS). 3 residues coordinate Fe cation: glutamate 248, glutamate 299, and histidine 302.

The protein belongs to the alternative oxidase family. In terms of assembly, homodimer; disulfide-linked. Fe cation serves as cofactor. Expressed in roots, stems, leaves, cotyledons and flowers. High expression in stamens.

Its subcellular location is the mitochondrion inner membrane. It carries out the reaction 2 a ubiquinol + O2 = 2 a ubiquinone + 2 H2O. Its function is as follows. Catalyzes the cyanide-resistant oxidation of ubiquinol and the reduction of molecular oxygen to water, but does not translocate protons and consequently is not linked to oxidative phosphorylation. May increase respiration when the cytochrome respiratory pathway is restricted, or in response to low temperatures. The chain is Ubiquinol oxidase 1c, mitochondrial (AOX1C) from Arabidopsis thaliana (Mouse-ear cress).